Here is a 238-residue protein sequence, read N- to C-terminus: MLRQGRGLSDLRPITMTRHFIKHPEGAVLVEFGDTRVICTASVEESVPPFLRGKGTGWVTAEYSMLPRATHTRSSREAAKGKQSGRTLEIQRLIGRSLRAVTDMTKLGERTIYLDCDVIQADGGTRTASITGAYVALVDAVSALLVQGKITGNPLKEAVAAVSVGIVDGQAVLDLDYQEDSSAEVDMNFVMTSSGRFVEVQGTAEAEPFTLEQMDAMRSLAMTGINQLFTYQQEALAR.

Residues Arg86 and 124 to 126 each bind phosphate; that span reads GTR.

The protein belongs to the RNase PH family. In terms of assembly, homohexameric ring arranged as a trimer of dimers.

The enzyme catalyses tRNA(n+1) + phosphate = tRNA(n) + a ribonucleoside 5'-diphosphate. In terms of biological role, phosphorolytic 3'-5' exoribonuclease that plays an important role in tRNA 3'-end maturation. Removes nucleotide residues following the 3'-CCA terminus of tRNAs; can also add nucleotides to the ends of RNA molecules by using nucleoside diphosphates as substrates, but this may not be physiologically important. Probably plays a role in initiation of 16S rRNA degradation (leading to ribosome degradation) during starvation. In Trichlorobacter lovleyi (strain ATCC BAA-1151 / DSM 17278 / SZ) (Geobacter lovleyi), this protein is Ribonuclease PH.